The chain runs to 210 residues: uncharacterized protein (210 aa).

The signal sequence occupies residues 1–20; that stretch reads MRVITLSGITLFLLASLASA. Over 21 to 175 the chain is Lumenal; the sequence is IELTFKLENQ…YSTVKSTQAR (155 aa). One can recognise a GOLD domain in the interval 32-115; the sequence is KQCYYLDSFH…DKIVTMEITM (84 aa). The N-linked (GlcNAc...) asparagine glycan is linked to N165. A helical transmembrane segment spans residues 176–196; it reads IFWFSLAESIMVVALSALQVF. Topologically, residues 197-210 are cytoplasmic; that stretch reads IVKTFFKRSGRRGV.

The protein belongs to the EMP24/GP25L family.

The protein localises to the endoplasmic reticulum membrane. This is an uncharacterized protein from Schizosaccharomyces pombe (strain 972 / ATCC 24843) (Fission yeast).